The chain runs to 165 residues: Large ribosomal subunit protein uL10 (165 aa).

It belongs to the universal ribosomal protein uL10 family. As to quaternary structure, part of the ribosomal stalk of the 50S ribosomal subunit. The N-terminus interacts with L11 and the large rRNA to form the base of the stalk. The C-terminus forms an elongated spine to which L12 dimers bind in a sequential fashion forming a multimeric L10(L12)X complex.

Functionally, forms part of the ribosomal stalk, playing a central role in the interaction of the ribosome with GTP-bound translation factors. The protein is Large ribosomal subunit protein uL10 of Deinococcus deserti (strain DSM 17065 / CIP 109153 / LMG 22923 / VCD115).